A 763-amino-acid chain; its full sequence is Endoplasmic reticulum membrane sensor NFE2L1 (763 aa).

The chain crosses the membrane as a helical; Signal-anchor for type II membrane protein span at residues Tyr-7–Val-24. Residues Asp-108 to Ser-150 form a disordered region. Positions Ser-116–Gln-131 are enriched in low complexity. A cholesterol recognition/amino acid consensus (CRAC) region region spans residues Ile-180–Lys-188. N-linked (GlcNAc...) asparagine glycosylation is found at Asn-338 and Asn-350. Positions Ser-369–Glu-373 are CPD. Asn-413 is a glycosylation site (N-linked (GlcNAc...) asparagine). 2 disordered regions span residues Glu-460–Thr-523 and Thr-585–Arg-604. The Destruction motif motif lies at Asp-466 to Ser-470. Low complexity predominate over residues Asp-466–Ala-514. Phosphoserine; by CK2 is present on Ser-519. The span at Gly-589 to Arg-604 shows a compositional bias: basic and acidic residues. Ser-590 carries the post-translational modification Phosphoserine; by PKA. Positions Leu-645–Leu-708 constitute a bZIP domain. Positions Arg-647–Lys-666 are basic motif. Residues Leu-673–Leu-687 are leucine-zipper. The Nuclear localization signal motif lies at Arg-752–Lys-759.

This sequence belongs to the bZIP family. CNC subfamily. Interacts with KEAP1. As to quaternary structure, interacts (via CPD region) with FBXW7; leading to its ubiquitination and degradation. Interacts with SYVN1/HRD1; leading to its ubiquitination and degradation. Interacts (when ubiquitinated) with DDI2; leading to its cleavage. In terms of assembly, interacts (via the bZIP domain) with small MAF protein (MAFF, MAFG or MAFK); required for binding to antioxidant response elements (AREs) on DNA. Interacts (via Destruction motif) with BTRC; leading to its ubiquitination and degradation. Interacts with CEBPB; the heterodimer represses expression of DSPP during odontoblast differentiation. Interacts with MOTS-c, a peptide produced by the mitochondrially encoded 12S rRNA MT-RNR1. In terms of processing, cleaved at Leu-104 by the aspartyl protease DDI2 following retrotranslocation, releasing the protein from the endoplasmic reticulum membrane and forming the transcription factor NRF1 that translocates into the nucleus. Ubiquitination is prerequisite for cleavage by aspartyl protease DDI2. N-glycosylated in normal conditions, when it has a single-pass type II membrane protein topology, with the DNA-binding domain facing the endoplasmic reticulum lumen. Deglycosylated during retrotranslocation to the cytosolic side of the membrane, to have a single-pass type III membrane protein topology with the major part of the protein facing the cytosol. Post-translationally, ubiquitinated by the SCF(FBXW7) complex and SYVN1/HRD1, leading to its degradation by the proteasome. Ubiquitinated during retrotranslocation to the cytosolic side of the membrane: ubiquitination does not lead to degradation and is required for processing by the aspartyl protease DDI2 and subsequent release from the endoplasmic reticulum membrane. In terms of processing, phosphorylation by CK2 at Ser-519 inhibits transcription factor activity, possibly by affecting DNA-binding activity. Phosphorylation at Ser-590 is required for interaction with CEBPB. Ubiquitinated by the SCF(BTRC) complex in the nucleus, leading to its degradation by the proteasome.

It is found in the endoplasmic reticulum membrane. The protein localises to the nucleus. Its function is as follows. Endoplasmic reticulum membrane sensor that translocates into the nucleus in response to various stresses to act as a transcription factor. Constitutes a precursor of the transcription factor NRF1. Able to detect various cellular stresses, such as cholesterol excess, oxidative stress or proteasome inhibition. In response to stress, it is released from the endoplasmic reticulum membrane following cleavage by the protease DDI2 and translocates into the nucleus to form the transcription factor NRF1. Acts as a key sensor of cholesterol excess: in excess cholesterol conditions, the endoplasmic reticulum membrane form of the protein directly binds cholesterol via its CRAC motif, preventing cleavage and release of the transcription factor NRF1, thereby allowing expression of genes promoting cholesterol removal, such as CD36. Involved in proteasome homeostasis: in response to proteasome inhibition, it is released from the endoplasmic reticulum membrane, translocates to the nucleus and activates expression of genes encoding proteasome subunits. Functionally, CNC-type bZIP family transcription factor that translocates to the nucleus and regulates expression of target genes in response to various stresses. Heterodimerizes with small-Maf proteins (MAFF, MAFG or MAFK) and binds DNA motifs including the antioxidant response elements (AREs), which regulate expression of genes involved in oxidative stress response. Activates or represses expression of target genes, depending on the context. Plays a key role in cholesterol homeostasis by acting as a sensor of cholesterol excess: in low cholesterol conditions, translocates into the nucleus and represses expression of genes involved in defense against cholesterol excess, such as CD36. In excess cholesterol conditions, the endoplasmic reticulum membrane form of the protein directly binds cholesterol via its CRAC motif, preventing cleavage and release of the transcription factor NRF1, thereby allowing expression of genes promoting cholesterol removal. Critical for redox balance in response to oxidative stress: acts by binding the AREs motifs on promoters and mediating activation of oxidative stress response genes, such as GCLC, GCLM, GSS, MT1 and MT2. Plays an essential role during fetal liver hematopoiesis: probably has a protective function against oxidative stress and is involved in lipid homeostasis in the liver. Involved in proteasome homeostasis: in response to proteasome inhibition, mediates the 'bounce-back' of proteasome subunits by translocating into the nucleus and activating expression of genes encoding proteasome subunits. Also involved in regulating glucose flux. Together with CEBPB; represses expression of DSPP during odontoblast differentiation. In response to ascorbic acid induction, activates expression of SP7/Osterix in osteoblasts. In Bos taurus (Bovine), this protein is Endoplasmic reticulum membrane sensor NFE2L1.